We begin with the raw amino-acid sequence, 675 residues long: Pescadillo homolog (675 aa).

Positions 309–331 are disordered; that stretch reads AGLDEAKEEPAAETTEESSETID. The BRCT domain occupies 352–471; sequence EAGSLFAPFT…RLVRPDLYAP (120 aa). Residues 475–675 form a disordered region; that stretch reads LPPHLSPWVK…RRKLEKGAAK (201 aa). A compositionally biased stretch (acidic residues) spans 498–518; sequence EQEEEGEAELDEDSDEEMEEA. The span at 519-530 shows a compositional bias: basic and acidic residues; it reads TSDKKAEAKADV. Acidic residues-rich tracts occupy residues 532 to 541 and 549 to 580; these read SESEDEDESV and GTDDDESESEDEEEDFDGFEEEAASESEDEEE. Residues 551-675 adopt a coiled-coil conformation; it reads DDDESESEDE…RRKLEKGAAK (125 aa). The segment covering 581 to 591 has biased composition (basic and acidic residues); sequence AARTQHQKELE. The span at 611–623 shows a compositional bias: basic residues; that stretch reads KKASQAKKIAAKK. The span at 624–634 shows a compositional bias: basic and acidic residues; that stretch reads RKEEEELERQK.

The protein belongs to the pescadillo family. In terms of assembly, component of the NOP7 complex, composed of erb1, nop7 and ytm1. The complex is held together by erb1, which interacts with nop7 via its N-terminal domain and with ytm1 via a high-affinity interaction between the seven-bladed beta-propeller domains of the 2 proteins. The NOP7 complex associates with the 66S pre-ribosome.

Its subcellular location is the nucleus. The protein resides in the nucleolus. The protein localises to the nucleoplasm. Functionally, component of the NOP7 complex, which is required for maturation of the 25S and 5.8S ribosomal RNAs and formation of the 60S ribosome. The protein is Pescadillo homolog (nop7) of Aspergillus fumigatus (strain CBS 144.89 / FGSC A1163 / CEA10) (Neosartorya fumigata).